Reading from the N-terminus, the 718-residue chain is Methionine--tRNA ligase (718 aa).

A 'HIGH' region motif is present at residues 27–37 (PYANGQIHIGH). Residues C158, C161, C171, and C174 each contribute to the Zn(2+) site. The short motif at 348–352 (KMSKS) is the 'KMSKS' region element. K351 contributes to the ATP binding site. In terms of domain architecture, tRNA-binding spans 612 to 718 (DFAKIDLRIA…SGAKPGMRVK (107 aa)).

The protein belongs to the class-I aminoacyl-tRNA synthetase family. MetG type 1 subfamily. Homodimer. Zn(2+) is required as a cofactor.

Its subcellular location is the cytoplasm. It carries out the reaction tRNA(Met) + L-methionine + ATP = L-methionyl-tRNA(Met) + AMP + diphosphate. In terms of biological role, is required not only for elongation of protein synthesis but also for the initiation of all mRNA translation through initiator tRNA(fMet) aminoacylation. This is Methionine--tRNA ligase from Burkholderia orbicola (strain AU 1054).